A 62-amino-acid chain; its full sequence is Large ribosomal subunit protein uL29 (62 aa).

The protein belongs to the universal ribosomal protein uL29 family.

This is Large ribosomal subunit protein uL29 from Desulfatibacillum aliphaticivorans.